The primary structure comprises 24 residues: DYE-linked aldehyde dehydrogenase, alpha chain (24 aa).

As to quaternary structure, heterotetramer composed of an alpha, a beta and two gamma chains. The cofactor is Mo-molybdopterin cytosine dinucleotide.

Functionally, active with aldehydes and formate esters as substrates. In Amycolatopsis methanolica, this protein is DYE-linked aldehyde dehydrogenase, alpha chain.